The primary structure comprises 957 residues: ERC protein 2 (957 aa).

The span at 1–13 shows a compositional bias: polar residues; that stretch reads MYGSARTISNLEG. The tract at residues 1 to 44 is disordered; sequence MYGSARTISNLEGSPSRSPRLPRSPRLGHRRTSSGGGGGTGKTL. Residues 14–25 show a composition bias toward low complexity; it reads SPSRSPRLPRSP. 2 positions are modified to phosphoserine: serine 65 and serine 666. A coiled-coil region spans residues 140-917; the sequence is RQVRDSTMLD…RMKLMADNYD (778 aa). Residues 922–943 show a composition bias toward basic residues; the sequence is HYHHHHHHHHHRSPGRSQHSNH. Residues 922 to 957 form a disordered region; the sequence is HYHHHHHHHHHRSPGRSQHSNHRPSPDQDDEEGIWA. Positions 948–957 are enriched in acidic residues; it reads DQDDEEGIWA.

As to quaternary structure, interacts with BSN, ERC1, PPFIA1, PPFIA2, PPFIA3 and PPFIA4. Interacts through its C-terminus with the PDZ domain of RIMS1. Part of a complex consisting of ERC2, RIMS1 and UNC13A. Expressed throughout the central nervous system, including hippocampus, cortex, cerebellum and olfactory bulb.

It is found in the cytoplasm. The protein resides in the synapse. Its subcellular location is the presynaptic active zone. It localises to the cytoskeleton. Its function is as follows. Thought to be involved in the organization of the cytomatrix at the nerve terminals active zone (CAZ) which regulates neurotransmitter release. Seems to act together with BSN. May recruit liprin-alpha proteins to the CAZ. The sequence is that of ERC protein 2 (Erc2) from Mus musculus (Mouse).